A 491-amino-acid polypeptide reads, in one-letter code: UDP-N-acetylmuramate--L-alanine ligase (491 aa).

ATP is bound at residue 126–132; the sequence is GTHGKTT.

This sequence belongs to the MurCDEF family.

It is found in the cytoplasm. It catalyses the reaction UDP-N-acetyl-alpha-D-muramate + L-alanine + ATP = UDP-N-acetyl-alpha-D-muramoyl-L-alanine + ADP + phosphate + H(+). It participates in cell wall biogenesis; peptidoglycan biosynthesis. In terms of biological role, cell wall formation. The chain is UDP-N-acetylmuramate--L-alanine ligase from Escherichia coli (strain SE11).